The sequence spans 357 residues: Histidinol-phosphate aminotransferase (357 aa).

Position 218 is an N6-(pyridoxal phosphate)lysine (Lys-218).

Belongs to the class-II pyridoxal-phosphate-dependent aminotransferase family. Histidinol-phosphate aminotransferase subfamily. As to quaternary structure, homodimer. Pyridoxal 5'-phosphate is required as a cofactor.

The catalysed reaction is L-histidinol phosphate + 2-oxoglutarate = 3-(imidazol-4-yl)-2-oxopropyl phosphate + L-glutamate. The protein operates within amino-acid biosynthesis; L-histidine biosynthesis; L-histidine from 5-phospho-alpha-D-ribose 1-diphosphate: step 7/9. The protein is Histidinol-phosphate aminotransferase of Prosthecochloris aestuarii (strain DSM 271 / SK 413).